The following is a 283-amino-acid chain: SNF1-related protein kinase regulatory subunit beta-1 (283 aa).

A compositionally biased stretch (basic and acidic residues) spans 1–10 (MGNANGKDED). The segment at 1-63 (MGNANGKDED…PARSPSPFLF (63 aa)) is disordered. A lipid anchor (N-myristoyl glycine) is attached at Gly-2. Low complexity predominate over residues 43-60 (SDSMSSSPPGSPARSPSP). The kinase-interacting sequence (KIS) stretch occupies residues 101 to 178 (PTIITWNQGG…VGNVCNILDV (78 aa)). The tract at residues 215 to 283 (EPLAVPPQLH…TVVLYKPLTR (69 aa)) is association with SNF1 complex (ASC).

Belongs to the 5'-AMP-activated protein kinase beta subunit family. In terms of assembly, subunit of a probable heterotrimeric complex consisting of an alpha catalytic (KIN10 or KIN11) subunit, and a beta (KINB) and a gamma (KING or SNF4) non-catalytic regulatory subunits. Interacts with SNF4 and CBL1. Interacts with FLZ1, FLZ2, FLZ8, FLZ9, FLZ10, FLZ12, FLZ13, FLZ14 and FLZ15. In terms of processing, sumoylated by SIZ1. Expressed in vegetative organs and, to lower extent, in reproductive organs.

Its subcellular location is the cell membrane. Its function is as follows. Regulatory subunit of the probable trimeric SNF1-related protein kinase (SnRK) complex, which may play a role in a signal transduction cascade regulating gene expression and carbohydrate metabolism in higher plants. The SnRK complex may also be involved in the regulation of fatty acid synthesis by phosphorylation of acetyl-CoA carboxylase and in assimilation of nitrogen by phosphorylating nitrate reductase. The chain is SNF1-related protein kinase regulatory subunit beta-1 (KINB1) from Arabidopsis thaliana (Mouse-ear cress).